The following is a 119-amino-acid chain: Large ribosomal subunit protein bL20 (119 aa).

This sequence belongs to the bacterial ribosomal protein bL20 family.

Its function is as follows. Binds directly to 23S ribosomal RNA and is necessary for the in vitro assembly process of the 50S ribosomal subunit. It is not involved in the protein synthesizing functions of that subunit. The polypeptide is Large ribosomal subunit protein bL20 (Xylella fastidiosa (strain M23)).